Here is a 502-residue protein sequence, read N- to C-terminus: Glutamate--tRNA ligase (502 aa).

The 'HIGH' region signature appears at 12-22 (PSPTGYLHVGG). A 'KMSKS' region motif is present at residues 259 to 263 (KLSKR). Residue lysine 262 participates in ATP binding.

Belongs to the class-I aminoacyl-tRNA synthetase family. Glutamate--tRNA ligase type 1 subfamily. Monomer.

Its subcellular location is the cytoplasm. The enzyme catalyses tRNA(Glu) + L-glutamate + ATP = L-glutamyl-tRNA(Glu) + AMP + diphosphate. Its function is as follows. Catalyzes the attachment of glutamate to tRNA(Glu) in a two-step reaction: glutamate is first activated by ATP to form Glu-AMP and then transferred to the acceptor end of tRNA(Glu). The chain is Glutamate--tRNA ligase from Chlorobium chlorochromatii (strain CaD3).